The sequence spans 365 residues: Probable dual-specificity RNA methyltransferase RlmN (365 aa).

E99 functions as the Proton acceptor in the catalytic mechanism. Residues 105 to 344 form the Radical SAM core domain; sequence QSYGLSVCVT…CVVRQEHGTD (240 aa). An intrachain disulfide couples C112 to C349. [4Fe-4S] cluster-binding residues include C119, C123, and C126. S-adenosyl-L-methionine is bound by residues 171–172, S203, 227–229, and N305; these read GE and SLH. C349 functions as the S-methylcysteine intermediate in the catalytic mechanism.

The protein belongs to the radical SAM superfamily. RlmN family. The cofactor is [4Fe-4S] cluster.

The protein localises to the cytoplasm. It carries out the reaction adenosine(2503) in 23S rRNA + 2 reduced [2Fe-2S]-[ferredoxin] + 2 S-adenosyl-L-methionine = 2-methyladenosine(2503) in 23S rRNA + 5'-deoxyadenosine + L-methionine + 2 oxidized [2Fe-2S]-[ferredoxin] + S-adenosyl-L-homocysteine. It catalyses the reaction adenosine(37) in tRNA + 2 reduced [2Fe-2S]-[ferredoxin] + 2 S-adenosyl-L-methionine = 2-methyladenosine(37) in tRNA + 5'-deoxyadenosine + L-methionine + 2 oxidized [2Fe-2S]-[ferredoxin] + S-adenosyl-L-homocysteine. Functionally, specifically methylates position 2 of adenine 2503 in 23S rRNA and position 2 of adenine 37 in tRNAs. The protein is Probable dual-specificity RNA methyltransferase RlmN of Lactococcus lactis subsp. cremoris (strain MG1363).